The following is a 660-amino-acid chain: MSNGNDNQVIELIQNFFLKSAGLVTTVESNRYSLDDTSIEFDDEWFDMNIDVLHDLPPIIDKWTNFDGTQELPPLVIETFLDLHLLPSSYTVRLRDDESHLWAVSKGNKKSEIVLERWLIELDKESTSFKNHVQSGSGVSPEKLDQQLRLLFRYLFTLLQLLPSNDLMMALNNQSESHNTPIPVDIKTRILDGSQPILSKGRIGLSRPIISSYSNIINNSNIPAHLEQKKITPVWTKYGLLRISVSYRRDCQFIFQDLNEDNSPNTQITNQPAKTNEISISLSPRSKNDLNQISHPSWQKKFISSSKQFQPFIVGSVGSANTPNQNSSRNPSNSSVVGPHYHPQHRLSIGSSTSVSTQPNYEGTSVGSTSKFASSFNNLRRHSSVRYHESTEKLAKTDKNNYEDTDDLMEFVRLIEAKPELQPKKGLSGLQDKNLSGSILRYQKLRPSNDMLSEDLALSVSIDPIHGSQRRNSNSHSHSPVASFSPSGHFSSINSKLSQPHLAVRGSSSTVNSRRNSVDKVLASALSPIYGGDIPEYHTKSHNPVFNEVDDEEEGNDDLLVNKIPININKHKMSTSPRSIDSISNSLTRNRTPFRQPYQYSQPTTIATQAYAKMHRPTVRSSDAISEINSRKGDNFHQLINDNDEDDLVFFMSDMNLPRE.

3 disordered regions span residues 315 to 369, 467 to 516, and 572 to 597; these read GSVG…VGST, GSQR…SRRN, and KMST…FRQP. Over residues 321–335 the composition is skewed to low complexity; sequence NTPNQNSSRNPSNSS. The span at 349–369 shows a compositional bias: polar residues; the sequence is IGSSTSVSTQPNYEGTSVGST. The segment covering 470–479 has biased composition (low complexity); it reads RRNSNSHSHS. The span at 480-498 shows a compositional bias: polar residues; it reads PVASFSPSGHFSSINSKLS. Positions 504-515 are enriched in low complexity; the sequence is VRGSSSTVNSRR. Over residues 574–597 the composition is skewed to polar residues; the sequence is STSPRSIDSISNSLTRNRTPFRQP.

It belongs to the ATG13 family. Fungi subfamily. As to quaternary structure, interacts with ATG1 to form the ATG1-ATG13 kinase complex.

It localises to the cytoplasm. The protein resides in the preautophagosomal structure. Activates the ATG1 kinase in a nutritional condition dependent manner through the TOR pathway, leading to autophagy. Also involved in cytoplasm to vacuole transport (Cvt) and more specifically in Cvt vesicle formation. Seems to play a role in the switching machinery regulating the conversion between the Cvt pathway and autophagy. Finally, ATG13 is also required for glycogen storage during stationary phase. The polypeptide is Autophagy-related protein 13 (ATG13) (Candida glabrata (strain ATCC 2001 / BCRC 20586 / JCM 3761 / NBRC 0622 / NRRL Y-65 / CBS 138) (Yeast)).